A 44-amino-acid chain; its full sequence is Phosphatase RapA inhibitor (44 aa).

A propeptide spanning residues 1 to 39 (MKSKWMSGLLLVAVGFSFTQVMVHAGETANTEGKTFHIA) is cleaved from the precursor.

This sequence belongs to the Phr family. Interacts with RapA and inhibits its interaction with Spo0F. Post-translationally, secreted with a propeptide domain, which is cleaved in the cell wall by the secreted serine proteases subtilisin and Vpr to produce a mature signaling peptide. Contains a predicted signal peptide cleavage site in the N-terminal region, however the propeptide is probably subject to only one processing event, at the N-terminal end of the mature peptide.

It is found in the secreted. Its subcellular location is the cytoplasm. Its activity is regulated as follows. Inhibition of RapA requires a free carboxylate group at the C-terminal end of the PhrA pentapeptide. A free C-terminal carboxylic acid PhrA pentapeptide inhibits RapA phosphatase activity at a 1:1 ratio and is approximately 200 fold more active than a C-terminal amide peptide. Signaling molecule involved in the regulation of sporulation. Secreted during production, but the mature peptide acts intracellularly, indicating that it needs to be imported into the cell to function. Inhibitor of the RapA phosphatase activity. Does not act on RapB. This Bacillus subtilis (strain 168) protein is Phosphatase RapA inhibitor.